We begin with the raw amino-acid sequence, 119 residues long: MTIDTSNEVKAIARYIRMSPLKVRRVLDQIRGRSYREALIILEFMPYRACDPILKVLRSAVANAEHNEGLDPATLVVSQAFADGGPTLKRFRPRAQGRAYQIRKPTCHITVAVAPSNKD.

This sequence belongs to the universal ribosomal protein uL22 family. In terms of assembly, part of the 50S ribosomal subunit.

In terms of biological role, this protein binds specifically to 23S rRNA; its binding is stimulated by other ribosomal proteins, e.g. L4, L17, and L20. It is important during the early stages of 50S assembly. It makes multiple contacts with different domains of the 23S rRNA in the assembled 50S subunit and ribosome. Its function is as follows. The globular domain of the protein is located near the polypeptide exit tunnel on the outside of the subunit, while an extended beta-hairpin is found that lines the wall of the exit tunnel in the center of the 70S ribosome. In Microcystis aeruginosa (strain NIES-843 / IAM M-2473), this protein is Large ribosomal subunit protein uL22.